The primary structure comprises 389 residues: Acetylornithine deacetylase (389 aa).

His85 is a binding site for Zn(2+). The active site involves Asp87. Asp117 contacts Zn(2+). Glu149 is a catalytic residue. Zn(2+) is bound by residues Glu150, Glu174, and His360.

The protein belongs to the peptidase M20A family. ArgE subfamily. Homodimer. Requires Zn(2+) as cofactor. The cofactor is Co(2+). Glutathione is required as a cofactor.

It is found in the cytoplasm. It carries out the reaction N(2)-acetyl-L-ornithine + H2O = L-ornithine + acetate. Its pathway is amino-acid biosynthesis; L-arginine biosynthesis; L-ornithine from N(2)-acetyl-L-ornithine (linear): step 1/1. Catalyzes the hydrolysis of the amide bond of N(2)-acetylated L-amino acids. Cleaves the acetyl group from N-acetyl-L-ornithine to form L-ornithine, an intermediate in L-arginine biosynthesis pathway, and a branchpoint in the synthesis of polyamines. This is Acetylornithine deacetylase from Yersinia pseudotuberculosis serotype O:1b (strain IP 31758).